We begin with the raw amino-acid sequence, 488 residues long: 3-octaprenyl-4-hydroxybenzoate carboxy-lyase (488 aa).

Residue Asn172 coordinates Mn(2+). Prenylated FMN is bound by residues 175 to 177, 189 to 191, and 194 to 195; these read IYR, RWL, and RG. A Mn(2+)-binding site is contributed by Glu238. The Proton donor role is filled by Asp287.

This sequence belongs to the UbiD family. In terms of assembly, homohexamer. Prenylated FMN serves as cofactor. Mn(2+) is required as a cofactor.

The protein resides in the cell membrane. The catalysed reaction is a 4-hydroxy-3-(all-trans-polyprenyl)benzoate + H(+) = a 2-(all-trans-polyprenyl)phenol + CO2. It functions in the pathway cofactor biosynthesis; ubiquinone biosynthesis. Catalyzes the decarboxylation of 3-octaprenyl-4-hydroxy benzoate to 2-octaprenylphenol, an intermediate step in ubiquinone biosynthesis. In Halorhodospira halophila (strain DSM 244 / SL1) (Ectothiorhodospira halophila (strain DSM 244 / SL1)), this protein is 3-octaprenyl-4-hydroxybenzoate carboxy-lyase.